The sequence spans 155 residues: Large ribosomal subunit protein uL13 (155 aa).

It belongs to the universal ribosomal protein uL13 family. As to quaternary structure, part of the 50S ribosomal subunit.

In terms of biological role, this protein is one of the early assembly proteins of the 50S ribosomal subunit, although it is not seen to bind rRNA by itself. It is important during the early stages of 50S assembly. The protein is Large ribosomal subunit protein uL13 of Rickettsia typhi (strain ATCC VR-144 / Wilmington).